Here is a 285-residue protein sequence, read N- to C-terminus: Troponin T, cardiac muscle (285 aa).

Acidic residues predominate over residues 1 to 58 (MSDVEEAVEEYEEQEEAAEEEHEEAVEEEAGGEAEAGEPCTAEDGEEEEGREAEDGPV). 2 disordered regions span residues 1–83 (MSDV…GERV) and 111–206 (RKKE…EKKK). An N-acetylserine modification is found at serine 2. Serine 2 carries the phosphoserine; by CK2 modification. Pro residues predominate over residues 66-77 (RPFMPNLVPPKI). Composition is skewed to basic and acidic residues over residues 111-171 (RKKE…DEAR) and 190-206 (QTER…EKKK). At threonine 191 the chain carries Phosphothreonine; by PKC/PRKCA. At serine 195 the chain carries Phosphoserine; by PKC/PRKCA. Threonine 200 is subject to Phosphothreonine; by PKC/PRKCA and RAF1. Threonine 281 is modified (phosphothreonine; by PKC/PRKCA).

The protein belongs to the troponin T family. Post-translationally, the N-terminus is blocked. Phosphorylation at Thr-200 by PRKCA induces significant reduction in myofilament calcium sensitivity and actomyosin ATPase activity.

Its function is as follows. Troponin T is the tropomyosin-binding subunit of troponin, the thin filament regulatory complex which confers calcium-sensitivity to striated muscle actomyosin ATPase activity. This is Troponin T, cardiac muscle (TNNT2) from Bos taurus (Bovine).